The chain runs to 447 residues: Ribosomal protein uS12 methylthiotransferase RimO (447 aa).

The region spanning 15 to 125 (PRVGFVSLGC…VMQAIHRHLP (111 aa)) is the MTTase N-terminal domain. Positions 24, 60, 89, 156, 160, and 163 each coordinate [4Fe-4S] cluster. The region spanning 142 to 379 (LTPKHYAYLK…MQWQEEISKK (238 aa)) is the Radical SAM core domain. The TRAM domain maps to 379 to 447 (KRLAGKKGRI…GIHDLWAKKI (69 aa)).

Belongs to the methylthiotransferase family. RimO subfamily. It depends on [4Fe-4S] cluster as a cofactor.

The protein localises to the cytoplasm. It carries out the reaction L-aspartate(89)-[ribosomal protein uS12]-hydrogen + (sulfur carrier)-SH + AH2 + 2 S-adenosyl-L-methionine = 3-methylsulfanyl-L-aspartate(89)-[ribosomal protein uS12]-hydrogen + (sulfur carrier)-H + 5'-deoxyadenosine + L-methionine + A + S-adenosyl-L-homocysteine + 2 H(+). Functionally, catalyzes the methylthiolation of an aspartic acid residue of ribosomal protein uS12. In Nitrosomonas europaea (strain ATCC 19718 / CIP 103999 / KCTC 2705 / NBRC 14298), this protein is Ribosomal protein uS12 methylthiotransferase RimO.